The following is a 506-amino-acid chain: ATP synthase subunit alpha, plastid (506 aa).

170–177 contributes to the ATP binding site; sequence GDRQTGKT.

Belongs to the ATPase alpha/beta chains family. In terms of assembly, F-type ATPases have 2 components, CF(1) - the catalytic core - and CF(0) - the membrane proton channel. CF(1) has five subunits: alpha(3), beta(3), gamma(1), delta(1), epsilon(1). CF(0) has four main subunits: a, b, b' and c.

It is found in the plastid membrane. It carries out the reaction ATP + H2O + 4 H(+)(in) = ADP + phosphate + 5 H(+)(out). Its function is as follows. Produces ATP from ADP in the presence of a proton gradient across the membrane. The alpha chain is a regulatory subunit. The protein is ATP synthase subunit alpha, plastid of Prototheca wickerhamii.